We begin with the raw amino-acid sequence, 782 residues long: Tripartite terminase subunit 1 (782 aa).

The segment at 190 to 218 (CLQCYEELAAVPNQGRSILKRLRGLLCDH) adopts a C3H1-type zinc-finger fold. An ATP-binding site is contributed by 666-673 (YNEAFGKE). A compositionally biased stretch (pro residues) spans 727–740 (APPPPAAPSPPPAE). Residues 727–754 (APPPPAAPSPPPAEPATTAGASRKRPAV) form a disordered region.

The protein belongs to the herpesviridae TRM1 protein family. Associates with TRM2 and TRM3 to form the tripartite terminase complex. Interacts with portal protein.

It is found in the host nucleus. Its function is as follows. Component of the molecular motor that translocates viral genomic DNA in empty capsid during DNA packaging. Forms a tripartite terminase complex together with TRM2 and TRM3 in the host cytoplasm. Once the complex reaches the host nucleus, it interacts with the capsid portal vertex. This portal forms a ring in which genomic DNA is translocated into the capsid. TRM1 carries an endonuclease activity that plays an important role for the cleavage of concatemeric viral DNA into unit length genomes. The chain is Tripartite terminase subunit 1 from Tupaiid herpesvirus (strain 2) (TuHV-2).